Here is a 1616-residue protein sequence, read N- to C-terminus: Myosin-IIIa (1616 aa).

The region spanning 21–287 is the Protein kinase domain; sequence WEITETIGKG…VSELLQHKFI (267 aa). ATP-binding positions include 27-35 and Lys-50; that span reads IGKGTYGKV. The active-site Proton acceptor is the Asp-150. The Myosin motor domain maps to 338-1053; the sequence is KDVDDLATLE…HVEQLNLMRK (716 aa). Positions 934–956 are actin-binding; sequence LMDLLSKMVVGQPHFVRCIKPNS. IQ domains follow at residues 1055–1084, 1082–1111, and 1346–1375; these read AIDK…KRKE, RKES…MKNT, and EDKA…SSFK. Residues 1401–1479 are interaction with MORN4; the sequence is EEINNIKKKD…RRVSSQQCLS (79 aa). Disordered stretches follow at residues 1545–1567 and 1581–1616; these read LPSR…QQEL and AESP…VQQS. Basic and acidic residues-rich tracts occupy residues 1550-1564 and 1583-1592; these read GPKE…RRPQ and SPEKEEEREP. Positions 1602–1616 are enriched in basic residues; sequence LLRKTSQRRRLVQQS.

It in the C-terminal section; belongs to the TRAFAC class myosin-kinesin ATPase superfamily. Myosin family. In the N-terminal section; belongs to the protein kinase superfamily. STE Ser/Thr protein kinase family. Interacts with MORN4. Interacts (via C-terminus) with ESPN and ESPNL. As to expression, strongest expression in retina, retinal pigment epithelial cells, cochlea and pancreas.

It localises to the cytoplasm. It is found in the cytoskeleton. Its subcellular location is the cell projection. The protein localises to the filopodium tip. The protein resides in the stereocilium. The catalysed reaction is L-seryl-[protein] + ATP = O-phospho-L-seryl-[protein] + ADP + H(+). It carries out the reaction L-threonyl-[protein] + ATP = O-phospho-L-threonyl-[protein] + ADP + H(+). The enzyme catalyses ATP + H2O = ADP + phosphate + H(+). Its function is as follows. Actin-dependent motor protein with a protein kinase activity, playing an essential role in hearing. Probably also plays a role in vision. Required for normal cochlear hair bundle development and hearing. Plays an important role in the early steps of cochlear hair bundle morphogenesis. Influences the number and lengths of stereocilia to be produced and limits the growth of microvilli within the forming auditory hair bundles thereby contributing to the architecture of the hair bundle, including its staircase pattern. Involved in the elongation of actin in stereocilia tips by transporting the actin regulatory factor ESPN to the plus ends of actin filaments. The polypeptide is Myosin-IIIa (MYO3A) (Homo sapiens (Human)).